A 269-amino-acid chain; its full sequence is Formamidopyrimidine-DNA glycosylase (269 aa).

The Schiff-base intermediate with DNA role is filled by Pro2. Glu3 functions as the Proton donor in the catalytic mechanism. Lys57 (proton donor; for beta-elimination activity) is an active-site residue. Residues His90, Arg109, and Lys150 each coordinate DNA. The FPG-type zinc finger occupies 235-269 (LVYGKAGEPCPECGEPLQELKIGQRNTFFCNECQQ). Catalysis depends on Arg259, which acts as the Proton donor; for delta-elimination activity.

Belongs to the FPG family. As to quaternary structure, monomer. Requires Zn(2+) as cofactor.

It carries out the reaction Hydrolysis of DNA containing ring-opened 7-methylguanine residues, releasing 2,6-diamino-4-hydroxy-5-(N-methyl)formamidopyrimidine.. It catalyses the reaction 2'-deoxyribonucleotide-(2'-deoxyribose 5'-phosphate)-2'-deoxyribonucleotide-DNA = a 3'-end 2'-deoxyribonucleotide-(2,3-dehydro-2,3-deoxyribose 5'-phosphate)-DNA + a 5'-end 5'-phospho-2'-deoxyribonucleoside-DNA + H(+). Its function is as follows. Involved in base excision repair of DNA damaged by oxidation or by mutagenic agents. Acts as a DNA glycosylase that recognizes and removes damaged bases. Has a preference for oxidized purines, such as 7,8-dihydro-8-oxoguanine (8-oxoG). Has AP (apurinic/apyrimidinic) lyase activity and introduces nicks in the DNA strand. Cleaves the DNA backbone by beta-delta elimination to generate a single-strand break at the site of the removed base with both 3'- and 5'-phosphates. The protein is Formamidopyrimidine-DNA glycosylase of Vibrio parahaemolyticus serotype O3:K6 (strain RIMD 2210633).